A 114-amino-acid polypeptide reads, in one-letter code: Ribonuclease P protein component (114 aa).

This sequence belongs to the RnpA family. In terms of assembly, consists of a catalytic RNA component (M1 or rnpB) and a protein subunit.

The enzyme catalyses Endonucleolytic cleavage of RNA, removing 5'-extranucleotides from tRNA precursor.. In terms of biological role, RNaseP catalyzes the removal of the 5'-leader sequence from pre-tRNA to produce the mature 5'-terminus. It can also cleave other RNA substrates such as 4.5S RNA. The protein component plays an auxiliary but essential role in vivo by binding to the 5'-leader sequence and broadening the substrate specificity of the ribozyme. This Exiguobacterium sp. (strain ATCC BAA-1283 / AT1b) protein is Ribonuclease P protein component.